Here is a 332-residue protein sequence, read N- to C-terminus: Ketol-acid reductoisomerase (NADP(+)) (332 aa).

The KARI N-terminal Rossmann domain maps to 2-182; the sequence is AKVYYDEDAS…GCTRAGLIET (181 aa). Residues 25–28, S51, S53, and 83–86 each bind NADP(+); these read YGSQ and DTIQ. Residue H108 is part of the active site. G134 contributes to the NADP(+) binding site. The 145-residue stretch at 183–327 folds into the KARI C-terminal knotted domain; it reads TFKEETETDL…KELRKMMPWL (145 aa). Mg(2+)-binding residues include D191, E195, E227, and E231. S252 is a substrate binding site.

This sequence belongs to the ketol-acid reductoisomerase family. Requires Mg(2+) as cofactor.

It catalyses the reaction (2R)-2,3-dihydroxy-3-methylbutanoate + NADP(+) = (2S)-2-acetolactate + NADPH + H(+). The enzyme catalyses (2R,3R)-2,3-dihydroxy-3-methylpentanoate + NADP(+) = (S)-2-ethyl-2-hydroxy-3-oxobutanoate + NADPH + H(+). Its pathway is amino-acid biosynthesis; L-isoleucine biosynthesis; L-isoleucine from 2-oxobutanoate: step 2/4. It functions in the pathway amino-acid biosynthesis; L-valine biosynthesis; L-valine from pyruvate: step 2/4. Involved in the biosynthesis of branched-chain amino acids (BCAA). Catalyzes an alkyl-migration followed by a ketol-acid reduction of (S)-2-acetolactate (S2AL) to yield (R)-2,3-dihydroxy-isovalerate. In the isomerase reaction, S2AL is rearranged via a Mg-dependent methyl migration to produce 3-hydroxy-3-methyl-2-ketobutyrate (HMKB). In the reductase reaction, this 2-ketoacid undergoes a metal-dependent reduction by NADPH to yield (R)-2,3-dihydroxy-isovalerate. This Persephonella marina (strain DSM 14350 / EX-H1) protein is Ketol-acid reductoisomerase (NADP(+)).